We begin with the raw amino-acid sequence, 225 residues long: Phosphoribosylformylglycinamidine synthase subunit PurQ (225 aa).

Positions 6–225 (FGVVVFPGSN…WQSILRSFAA (220 aa)) constitute a Glutamine amidotransferase type-1 domain. The active-site Nucleophile is the cysteine 89. Active-site residues include histidine 198 and glutamate 200.

In terms of assembly, part of the FGAM synthase complex composed of 1 PurL, 1 PurQ and 2 PurS subunits.

The protein resides in the cytoplasm. The catalysed reaction is N(2)-formyl-N(1)-(5-phospho-beta-D-ribosyl)glycinamide + L-glutamine + ATP + H2O = 2-formamido-N(1)-(5-O-phospho-beta-D-ribosyl)acetamidine + L-glutamate + ADP + phosphate + H(+). It carries out the reaction L-glutamine + H2O = L-glutamate + NH4(+). The protein operates within purine metabolism; IMP biosynthesis via de novo pathway; 5-amino-1-(5-phospho-D-ribosyl)imidazole from N(2)-formyl-N(1)-(5-phospho-D-ribosyl)glycinamide: step 1/2. Its function is as follows. Part of the phosphoribosylformylglycinamidine synthase complex involved in the purines biosynthetic pathway. Catalyzes the ATP-dependent conversion of formylglycinamide ribonucleotide (FGAR) and glutamine to yield formylglycinamidine ribonucleotide (FGAM) and glutamate. The FGAM synthase complex is composed of three subunits. PurQ produces an ammonia molecule by converting glutamine to glutamate. PurL transfers the ammonia molecule to FGAR to form FGAM in an ATP-dependent manner. PurS interacts with PurQ and PurL and is thought to assist in the transfer of the ammonia molecule from PurQ to PurL. This is Phosphoribosylformylglycinamidine synthase subunit PurQ from Synechococcus sp. (strain JA-2-3B'a(2-13)) (Cyanobacteria bacterium Yellowstone B-Prime).